We begin with the raw amino-acid sequence, 347 residues long: CD5 antigen-like (347 aa).

The first 19 residues, Met1–Ala19, serve as a signal peptide directing secretion. SRCR domains are found at residues Val24–Glu125, Val138–Glu239, and Leu244–Ser346. Disulfide bonds link Cys33–Cys67, Cys49–Cys114, Cys62–Cys124, Cys96–Cys106, Cys163–Cys228, Cys176–Cys238, Cys208–Cys218, Cys253–Cys287, Cys269–Cys335, Cys282–Cys345, and Cys315–Cys325.

In terms of assembly, interacts with FASN; the interaction is direct. Interacts (via SRCR2 and SRCR3) with pentameric IgM (via Fc region); disulfide-linked. In terms of processing, not N-glycosylated. Probably not O-glycosylated. As to expression, expressed in spleen, lymph node, thymus, bone marrow, and fetal liver, but not in non-lymphoid tissues.

The protein resides in the secreted. Its subcellular location is the cytoplasm. Its function is as follows. Secreted protein that acts as a key regulator of lipid synthesis: mainly expressed by macrophages in lymphoid and inflamed tissues and regulates mechanisms in inflammatory responses, such as infection or atherosclerosis. Able to inhibit lipid droplet size in adipocytes. Following incorporation into mature adipocytes via CD36-mediated endocytosis, associates with cytosolic FASN, inhibiting fatty acid synthase activity and leading to lipolysis, the degradation of triacylglycerols into glycerol and free fatty acids (FFA). CD5L-induced lipolysis occurs with progression of obesity: participates in obesity-associated inflammation following recruitment of inflammatory macrophages into adipose tissues, a cause of insulin resistance and obesity-related metabolic disease. Regulation of intracellular lipids mediated by CD5L has a direct effect on transcription regulation mediated by nuclear receptors ROR-gamma (RORC). Acts as a key regulator of metabolic switch in T-helper Th17 cells. Regulates the expression of pro-inflammatory genes in Th17 cells by altering the lipid content and limiting synthesis of cholesterol ligand of RORC, the master transcription factor of Th17-cell differentiation. CD5L is mainly present in non-pathogenic Th17 cells, where it decreases the content of polyunsaturated fatty acyls (PUFA), affecting two metabolic proteins MSMO1 and CYP51A1, which synthesize ligands of RORC, limiting RORC activity and expression of pro-inflammatory genes. Participates in obesity-associated autoimmunity via its association with IgM, interfering with the binding of IgM to Fcalpha/mu receptor and enhancing the development of long-lived plasma cells that produce high-affinity IgG autoantibodies. Also acts as an inhibitor of apoptosis in macrophages: promotes macrophage survival from the apoptotic effects of oxidized lipids in case of atherosclerosis. Involved in early response to microbial infection against various pathogens by acting as a pattern recognition receptor and by promoting autophagy. This chain is CD5 antigen-like (CD5L), found in Homo sapiens (Human).